A 169-amino-acid chain; its full sequence is NAD(P)H-quinone oxidoreductase subunit J, chloroplastic (169 aa).

Belongs to the complex I 30 kDa subunit family. As to quaternary structure, NDH is composed of at least 16 different subunits, 5 of which are encoded in the nucleus.

Its subcellular location is the plastid. It localises to the chloroplast thylakoid membrane. The enzyme catalyses a plastoquinone + NADH + (n+1) H(+)(in) = a plastoquinol + NAD(+) + n H(+)(out). The catalysed reaction is a plastoquinone + NADPH + (n+1) H(+)(in) = a plastoquinol + NADP(+) + n H(+)(out). NDH shuttles electrons from NAD(P)H:plastoquinone, via FMN and iron-sulfur (Fe-S) centers, to quinones in the photosynthetic chain and possibly in a chloroplast respiratory chain. The immediate electron acceptor for the enzyme in this species is believed to be plastoquinone. Couples the redox reaction to proton translocation, and thus conserves the redox energy in a proton gradient. This chain is NAD(P)H-quinone oxidoreductase subunit J, chloroplastic, found in Marchantia polymorpha (Common liverwort).